The following is a 427-amino-acid chain: Glutamate-1-semialdehyde 2,1-aminomutase (427 aa).

Lys-269 is subject to N6-(pyridoxal phosphate)lysine.

The protein belongs to the class-III pyridoxal-phosphate-dependent aminotransferase family. HemL subfamily. Homodimer. It depends on pyridoxal 5'-phosphate as a cofactor.

It localises to the cytoplasm. It carries out the reaction (S)-4-amino-5-oxopentanoate = 5-aminolevulinate. Its pathway is porphyrin-containing compound metabolism; protoporphyrin-IX biosynthesis; 5-aminolevulinate from L-glutamyl-tRNA(Glu): step 2/2. The protein is Glutamate-1-semialdehyde 2,1-aminomutase of Thermus thermophilus (strain ATCC BAA-163 / DSM 7039 / HB27).